Consider the following 201-residue polypeptide: Recombination protein RecR (201 aa).

The C4-type zinc finger occupies 57–72 (CADCRTFTEQDVCNIC). A Toprim domain is found at 81-176 (GQICVVESPA…EASRIAHGVP (96 aa)).

Belongs to the RecR family.

In terms of biological role, may play a role in DNA repair. It seems to be involved in an RecBC-independent recombinational process of DNA repair. It may act with RecF and RecO. The sequence is that of Recombination protein RecR from Citrobacter koseri (strain ATCC BAA-895 / CDC 4225-83 / SGSC4696).